The following is a 256-amino-acid chain: MNDLLTIGDKTFRSRLFTGTGKFPNASVMQKALIESGSELSTMALKRVEVNNPEDNILKPIVDAGINLLPNTSGAKNAREAIFAAQLAREALGTNWLKLEIHPDPKYLMPDPIETLTAAEELVKQGFIVLPYCHADPVLCKRLEEVGCAAVMPLGAPIGSNKGIVSRDFLEIIIDQARVPVVVDAGIGAPSHAALAMELGADAVLVNTAIAAARNPIAMATAFKLAVQSGRLAYENGLASVNTQAVASSPLTAFLD.

Catalysis depends on lysine 98, which acts as the Schiff-base intermediate with DXP. Residues glycine 159, 185-186 (AG), and 207-208 (NT) contribute to the 1-deoxy-D-xylulose 5-phosphate site.

This sequence belongs to the ThiG family. Homotetramer. Forms heterodimers with either ThiH or ThiS.

It is found in the cytoplasm. It catalyses the reaction [ThiS sulfur-carrier protein]-C-terminal-Gly-aminoethanethioate + 2-iminoacetate + 1-deoxy-D-xylulose 5-phosphate = [ThiS sulfur-carrier protein]-C-terminal Gly-Gly + 2-[(2R,5Z)-2-carboxy-4-methylthiazol-5(2H)-ylidene]ethyl phosphate + 2 H2O + H(+). It participates in cofactor biosynthesis; thiamine diphosphate biosynthesis. Functionally, catalyzes the rearrangement of 1-deoxy-D-xylulose 5-phosphate (DXP) to produce the thiazole phosphate moiety of thiamine. Sulfur is provided by the thiocarboxylate moiety of the carrier protein ThiS. In vitro, sulfur can be provided by H(2)S. The sequence is that of Thiazole synthase from Aliivibrio fischeri (strain ATCC 700601 / ES114) (Vibrio fischeri).